A 264-amino-acid chain; its full sequence is Thymidylate synthase (264 aa).

Position 21 (arginine 21) interacts with dUMP. (6R)-5,10-methylene-5,6,7,8-tetrahydrofolate is bound at residue histidine 51. DUMP is bound at residue arginine 126 to arginine 127. Residue cysteine 146 is the Nucleophile of the active site. DUMP-binding positions include arginine 166 to aspartate 169, asparagine 177, and histidine 207 to tyrosine 209. Aspartate 169 contributes to the (6R)-5,10-methylene-5,6,7,8-tetrahydrofolate binding site. Residue serine 263 coordinates (6R)-5,10-methylene-5,6,7,8-tetrahydrofolate.

Belongs to the thymidylate synthase family. Bacterial-type ThyA subfamily. In terms of assembly, homodimer.

It is found in the cytoplasm. The enzyme catalyses dUMP + (6R)-5,10-methylene-5,6,7,8-tetrahydrofolate = 7,8-dihydrofolate + dTMP. It participates in pyrimidine metabolism; dTTP biosynthesis. Catalyzes the reductive methylation of 2'-deoxyuridine-5'-monophosphate (dUMP) to 2'-deoxythymidine-5'-monophosphate (dTMP) while utilizing 5,10-methylenetetrahydrofolate (mTHF) as the methyl donor and reductant in the reaction, yielding dihydrofolate (DHF) as a by-product. This enzymatic reaction provides an intracellular de novo source of dTMP, an essential precursor for DNA biosynthesis. The sequence is that of Thymidylate synthase from Neisseria meningitidis serogroup C / serotype 2a (strain ATCC 700532 / DSM 15464 / FAM18).